A 498-amino-acid polypeptide reads, in one-letter code: Lysine--tRNA ligase (498 aa).

Mg(2+) is bound by residues Glu401 and Glu408.

This sequence belongs to the class-II aminoacyl-tRNA synthetase family. As to quaternary structure, homodimer. Mg(2+) serves as cofactor.

The protein localises to the cytoplasm. It catalyses the reaction tRNA(Lys) + L-lysine + ATP = L-lysyl-tRNA(Lys) + AMP + diphosphate. In Dehalococcoides mccartyi (strain ATCC BAA-2266 / KCTC 15142 / 195) (Dehalococcoides ethenogenes (strain 195)), this protein is Lysine--tRNA ligase.